A 500-amino-acid polypeptide reads, in one-letter code: C6 finger domain transcription factor sirZ (500 aa).

A DNA-binding region (zn(2)-C6 fungal-type) is located at residues 28–54 (CNACHEVKLKCLGGQPCARCRNKQVEC). Basic and acidic residues predominate over residues 79-88 (QAKAMSRPEE). Disordered stretches follow at residues 79–168 (QAKA…EQIS) and 302–332 (AGSF…GMYQ). Over residues 135–147 (GAEEELLDQEERD) the composition is skewed to acidic residues. A compositionally biased stretch (low complexity) spans 154–165 (LVENPPNLNPLE). Positions 304–316 (SFSTSGPGSSQEG) are enriched in polar residues. Residues 317–328 (SHFLSSRHSQSS) are compositionally biased toward low complexity.

The protein localises to the nucleus. Its function is as follows. Transcription factor that regulates sirodesmin production and contributes to virulence. Probably binds to the consensus motif TCGGN(3)CCGA found in the promoters of sirT, sirP, sirO, sirN, sirP, sirB, sirR, sirJ and sirQ. This is C6 finger domain transcription factor sirZ from Leptosphaeria maculans (Blackleg fungus).